Here is a 106-residue protein sequence, read N- to C-terminus: uncharacterized protein (106 aa).

A run of 2 helical transmembrane segments spans residues 17–37 (AGLL…AVLV) and 55–75 (FSSS…FMIF).

The protein localises to the membrane. This is an uncharacterized protein from Saccharomyces cerevisiae (strain ATCC 204508 / S288c) (Baker's yeast).